Here is an 861-residue protein sequence, read N- to C-terminus: DNA mismatch repair protein MutS (861 aa).

616–623 (GPNMGGKS) contributes to the ATP binding site.

Belongs to the DNA mismatch repair MutS family.

Its function is as follows. This protein is involved in the repair of mismatches in DNA. It is possible that it carries out the mismatch recognition step. This protein has a weak ATPase activity. This Haemophilus influenzae (strain PittEE) protein is DNA mismatch repair protein MutS.